The primary structure comprises 173 residues: dCTP deaminase, dUMP-forming (173 aa).

DCTP-binding positions include 93–98 (RSSIGR), Asp111, 119–121 (TLE), and Gln138. The Proton donor/acceptor role is filled by Glu121.

Belongs to the dCTP deaminase family. In terms of assembly, homotrimer.

The catalysed reaction is dCTP + 2 H2O = dUMP + NH4(+) + diphosphate. The protein operates within pyrimidine metabolism; dUMP biosynthesis; dUMP from dCTP: step 1/1. Functionally, bifunctional enzyme that catalyzes both the deamination of dCTP to dUTP and the hydrolysis of dUTP to dUMP without releasing the toxic dUTP intermediate. This is dCTP deaminase, dUMP-forming from Leptospira borgpetersenii serovar Hardjo-bovis (strain JB197).